Here is an 883-residue protein sequence, read N- to C-terminus: Phosphoenolpyruvate carboxylase (883 aa).

Catalysis depends on residues H138 and K546.

The protein belongs to the PEPCase type 1 family. It depends on Mg(2+) as a cofactor.

The enzyme catalyses oxaloacetate + phosphate = phosphoenolpyruvate + hydrogencarbonate. Functionally, forms oxaloacetate, a four-carbon dicarboxylic acid source for the tricarboxylic acid cycle. This chain is Phosphoenolpyruvate carboxylase, found in Escherichia coli O127:H6 (strain E2348/69 / EPEC).